The sequence spans 392 residues: Outer membrane protein assembly factor BamB (392 aa).

A signal peptide spans 1 to 19; the sequence is MQLRKLLLPGLLSVTLLSG. A lipid anchor (N-palmitoyl cysteine) is attached at Cys-20. Residue Cys-20 is the site of S-diacylglycerol cysteine attachment.

Belongs to the BamB family. Part of the Bam complex, which is composed of the outer membrane protein BamA, and four lipoproteins BamB, BamC, BamD and BamE.

It is found in the cell outer membrane. Its function is as follows. Part of the outer membrane protein assembly complex, which is involved in assembly and insertion of beta-barrel proteins into the outer membrane. This Salmonella typhimurium (strain LT2 / SGSC1412 / ATCC 700720) protein is Outer membrane protein assembly factor BamB.